The sequence spans 800 residues: Transducin beta-like protein 3 (800 aa).

The residue at position 2 (alanine 2) is an N-acetylalanine. 13 WD repeats span residues 64-105 (EDQE…RLWK), 107-146 (IHTA…GTHH), 149-190 (GSPG…CLAV), 193-232 (AHYS…ATRT), 245-284 (LPEE…CVHA), 290-329 (GPGR…LRKQ), 332-372 (GYSE…CQIL), 374-413 (GHTD…EVAC), 419-459 (GHTH…LSKG), 477-516 (CHDK…LLGT), 519-560 (GHRR…KTFE), 562-602 (HDAS…RTLD), and 604-642 (HEDK…EQAE). Serine 257 is modified (phosphoserine). Residue lysine 407 forms a Glycyl lysine isopeptide (Lys-Gly) (interchain with G-Cter in SUMO2) linkage.

Part of the small subunit (SSU) processome, composed of more than 70 proteins and the RNA chaperone small nucleolar RNA (snoRNA) U3.

The protein localises to the nucleus. Its subcellular location is the nucleolus. Functionally, part of the small subunit (SSU) processome, first precursor of the small eukaryotic ribosomal subunit. During the assembly of the SSU processome in the nucleolus, many ribosome biogenesis factors, an RNA chaperone and ribosomal proteins associate with the nascent pre-rRNA and work in concert to generate RNA folding, modifications, rearrangements and cleavage as well as targeted degradation of pre-ribosomal RNA by the RNA exosome. The protein is Transducin beta-like protein 3 (TBL3) of Bos taurus (Bovine).